Consider the following 292-residue polypeptide: Acetylglutamate kinase (292 aa).

Residues 64 to 65, Arg86, and Asn190 contribute to the substrate site; that span reads GG.

This sequence belongs to the acetylglutamate kinase family. ArgB subfamily.

It localises to the cytoplasm. The enzyme catalyses N-acetyl-L-glutamate + ATP = N-acetyl-L-glutamyl 5-phosphate + ADP. It functions in the pathway amino-acid biosynthesis; L-arginine biosynthesis; N(2)-acetyl-L-ornithine from L-glutamate: step 2/4. In terms of biological role, catalyzes the ATP-dependent phosphorylation of N-acetyl-L-glutamate. The sequence is that of Acetylglutamate kinase from Geobacter sulfurreducens (strain ATCC 51573 / DSM 12127 / PCA).